An 88-amino-acid chain; its full sequence is UPF0147 protein Ta0600 (88 aa).

The protein belongs to the UPF0147 family.

The protein is UPF0147 protein Ta0600 of Thermoplasma acidophilum (strain ATCC 25905 / DSM 1728 / JCM 9062 / NBRC 15155 / AMRC-C165).